A 239-amino-acid polypeptide reads, in one-letter code: Fatty acid metabolism regulator protein (239 aa).

One can recognise an HTH gntR-type domain in the interval 6–74; sequence QSPAGFAEEY…HGKPTKVNNF (69 aa). Residues 34 to 53 constitute a DNA-binding region (H-T-H motif); sequence ERELSELIGVTRTTLREVLQ.

Homodimer.

It localises to the cytoplasm. Multifunctional regulator of fatty acid metabolism. Represses transcription of at least eight genes required for fatty acid transport and beta-oxidation including fadA, fadB, fadD, fadL and fadE. Activates transcription of at least three genes required for unsaturated fatty acid biosynthesis: fabA, fabB and iclR, the gene encoding the transcriptional regulator of the aceBAK operon encoding the glyoxylate shunt enzymes. Binding of FadR is specifically inhibited by long chain fatty acyl-CoA compounds. The polypeptide is Fatty acid metabolism regulator protein (Salmonella typhi).